Reading from the N-terminus, the 863-residue chain is Glycerol-3-phosphate acyltransferase (863 aa).

The segment at 1-29 is disordered; it reads MPKKNSPLLPKETTTTQSSVDTSGSSNLT. Residues 12–29 show a composition bias toward polar residues; the sequence is ETTTTQSSVDTSGSSNLT. The short motif at 343-348 is the HXXXXD motif element; that stretch reads SHRSHM.

It belongs to the GPAT/DAPAT family.

Its subcellular location is the cell inner membrane. The enzyme catalyses sn-glycerol 3-phosphate + an acyl-CoA = a 1-acyl-sn-glycero-3-phosphate + CoA. The protein operates within phospholipid metabolism; CDP-diacylglycerol biosynthesis; CDP-diacylglycerol from sn-glycerol 3-phosphate: step 1/3. The protein is Glycerol-3-phosphate acyltransferase of Xylella fastidiosa (strain M23).